The following is a 102-amino-acid chain: Large ribosomal subunit protein eL30 (102 aa).

This sequence belongs to the eukaryotic ribosomal protein eL30 family. Part of the 50S ribosomal subunit.

The sequence is that of Large ribosomal subunit protein eL30 from Thermococcus kodakarensis (strain ATCC BAA-918 / JCM 12380 / KOD1) (Pyrococcus kodakaraensis (strain KOD1)).